Consider the following 316-residue polypeptide: Fe-S cluster assembly protein DRE2 (316 aa).

The interval 4-156 is N-terminal SAM-like domain; that stretch reads SMPVATTVAA…KPQHVASTSV (153 aa). The segment at 157–202 is linker; the sequence is PLKSRQPGALLNRKKTDPAKKQALWALSSPSTPKIDPEALLTAEDK. Positions 209, 223, 226, and 228 each coordinate [2Fe-2S] cluster. Positions 209-228 are fe-S binding site A; sequence CEPVRSSAPRRKKACKSCSC. Residues cysteine 279, cysteine 282, cysteine 290, and cysteine 293 each coordinate [4Fe-4S] cluster. 2 consecutive short sequence motifs (cx2C motif) follow at residues 279–282 and 290–293; these read CGSC and CAGC. The segment at 279–293 is fe-S binding site B; it reads CGSCFLGDAFRCAGC.

It belongs to the anamorsin family. In terms of assembly, monomer. Interacts with TAH18. Interacts with MIA40. [2Fe-2S] cluster is required as a cofactor. The cofactor is [4Fe-4S] cluster.

It is found in the cytoplasm. It localises to the mitochondrion intermembrane space. Component of the cytosolic iron-sulfur (Fe-S) protein assembly (CIA) machinery required for the maturation of extramitochondrial Fe-S proteins. Part of an electron transfer chain functioning in an early step of cytosolic Fe-S biogenesis, facilitating the de novo assembly of a [4Fe-4S] cluster on the scaffold complex CFD1-NBP35. Electrons are transferred to DRE2 from NADPH via the FAD- and FMN-containing protein TAH18. TAH18-DRE2 are also required for the assembly of the diferric tyrosyl radical cofactor of ribonucleotide reductase (RNR), probably by providing electrons for reduction during radical cofactor maturation in the catalytic small subunit RNR2. This chain is Fe-S cluster assembly protein DRE2, found in Laccaria bicolor (strain S238N-H82 / ATCC MYA-4686) (Bicoloured deceiver).